Here is a 251-residue protein sequence, read N- to C-terminus: Probable transcriptional regulatory protein Blon_1155/BLIJ_1182 (251 aa).

It belongs to the TACO1 family.

Its subcellular location is the cytoplasm. The chain is Probable transcriptional regulatory protein Blon_1155/BLIJ_1182 from Bifidobacterium longum subsp. infantis (strain ATCC 15697 / DSM 20088 / JCM 1222 / NCTC 11817 / S12).